The primary structure comprises 244 residues: LexA repressor (244 aa).

Residues 1–24 form a disordered region; it reads MSDSSDTTVDGASDGASDGASGAD. The segment covering 10–24 has biased composition (low complexity); that stretch reads DGASDGASDGASGAD. The segment at residues 58-78 is a DNA-binding region (H-T-H motif); it reads IREIGDAVGLTSTSSVAHQLR. Residues Ser168 and Lys205 each act as for autocatalytic cleavage activity in the active site.

The protein belongs to the peptidase S24 family. In terms of assembly, homodimer.

It catalyses the reaction Hydrolysis of Ala-|-Gly bond in repressor LexA.. In terms of biological role, represses a number of genes involved in the response to DNA damage (SOS response), including recA and lexA. In the presence of single-stranded DNA, RecA interacts with LexA causing an autocatalytic cleavage which disrupts the DNA-binding part of LexA, leading to derepression of the SOS regulon and eventually DNA repair. In Mycobacterium marinum (strain ATCC BAA-535 / M), this protein is LexA repressor.